The chain runs to 457 residues: Phosphoglucosamine mutase (457 aa).

Ser-105 acts as the Phosphoserine intermediate in catalysis. The Mg(2+) site is built by Ser-105, Asp-247, Asp-249, and Asp-251. Ser-105 bears the Phosphoserine mark.

This sequence belongs to the phosphohexose mutase family. Mg(2+) serves as cofactor. Activated by phosphorylation.

The catalysed reaction is alpha-D-glucosamine 1-phosphate = D-glucosamine 6-phosphate. Its function is as follows. Catalyzes the conversion of glucosamine-6-phosphate to glucosamine-1-phosphate. This chain is Phosphoglucosamine mutase, found in Protochlamydia amoebophila (strain UWE25).